The following is a 120-amino-acid chain: Lysozyme (120 aa).

In terms of domain architecture, C-type lysozyme spans 1–120 (KRFTRCGLVN…NHSNPDISSC (120 aa)). 4 cysteine pairs are disulfide-bonded: Cys6–Cys120, Cys27–Cys110, Cys62–Cys76, and Cys72–Cys90. Residues Glu32 and Asp50 contribute to the active site.

It belongs to the glycosyl hydrolase 22 family. Monomer.

The enzyme catalyses Hydrolysis of (1-&gt;4)-beta-linkages between N-acetylmuramic acid and N-acetyl-D-glucosamine residues in a peptidoglycan and between N-acetyl-D-glucosamine residues in chitodextrins.. In terms of biological role, lysozymes have primarily a bacteriolytic function; those in tissues and body fluids are associated with the monocyte-macrophage system and enhance the activity of immunoagents. This Antheraea mylitta (Tasar silkworm) protein is Lysozyme.